The following is a 340-amino-acid chain: Glutamyl-tRNA reductase (340 aa).

Residues 49 to 52, S108, 113 to 115, and Q119 contribute to the substrate site; these read TCNR and ETE. Residue C50 is the Nucleophile of the active site. An NADP(+)-binding site is contributed by 188–193; that stretch reads GAGEMS.

This sequence belongs to the glutamyl-tRNA reductase family. As to quaternary structure, homodimer.

It carries out the reaction (S)-4-amino-5-oxopentanoate + tRNA(Glu) + NADP(+) = L-glutamyl-tRNA(Glu) + NADPH + H(+). It functions in the pathway porphyrin-containing compound metabolism; protoporphyrin-IX biosynthesis; 5-aminolevulinate from L-glutamyl-tRNA(Glu): step 1/2. Functionally, catalyzes the NADPH-dependent reduction of glutamyl-tRNA(Glu) to glutamate 1-semialdehyde (GSA). The chain is Glutamyl-tRNA reductase from Akkermansia muciniphila (strain ATCC BAA-835 / DSM 22959 / JCM 33894 / BCRC 81048 / CCUG 64013 / CIP 107961 / Muc).